A 116-amino-acid chain; its full sequence is DNA-directed RNA polymerase subunit omega (116 aa).

Belongs to the RNA polymerase subunit omega family. The RNAP catalytic core consists of 2 alpha, 1 beta, 1 beta' and 1 omega subunit. When a sigma factor is associated with the core the holoenzyme is formed, which can initiate transcription.

It catalyses the reaction RNA(n) + a ribonucleoside 5'-triphosphate = RNA(n+1) + diphosphate. Its function is as follows. Promotes RNA polymerase assembly. Latches the N- and C-terminal regions of the beta' subunit thereby facilitating its interaction with the beta and alpha subunits. This is DNA-directed RNA polymerase subunit omega from Hyphomonas neptunium (strain ATCC 15444).